A 318-amino-acid polypeptide reads, in one-letter code: Protein W (318 aa).

Disordered regions lie at residues 1–23 (MDQDAFILKEDSEVEREAPGGRE) and 38–318 (SEPT…KKGA). Basic and acidic residues predominate over residues 7 to 20 (ILKEDSEVEREAPG). Positions 50–59 (LHNTINTPQG) are enriched in polar residues. S68 is modified (phosphoserine; by host). Positions 83–101 (RSGEESRVSGRTSKPEAEA) are enriched in basic and acidic residues. S125 carries the phosphoserine; by host modification. Over residues 150-168 (GIEDENREMAAHPDKRGED) the composition is skewed to basic and acidic residues. The segment covering 191-206 (ASNNGRSMEPGSSHSA) has biased composition (polar residues). S192, S249, S257, and S260 each carry phosphoserine; by host.

In Sendai virus (strain Harris) (SeV), this protein is Protein W (P/V/C).